Consider the following 78-residue polypeptide: MKVSSHAMVPTHEIIPREEIPLLLEKYNIKLQQLPKLLDTDPLVLEVEAAPGDVLKITRMSPTAGESTYYRLVIATSL.

This sequence belongs to the archaeal Rpo5/eukaryotic RPB5 RNA polymerase subunit family. In terms of assembly, part of the RNA polymerase complex.

The protein resides in the cytoplasm. The catalysed reaction is RNA(n) + a ribonucleoside 5'-triphosphate = RNA(n+1) + diphosphate. Functionally, DNA-dependent RNA polymerase (RNAP) catalyzes the transcription of DNA into RNA using the four ribonucleoside triphosphates as substrates. The protein is DNA-directed RNA polymerase subunit Rpo5 of Methanococcus maripaludis (strain C7 / ATCC BAA-1331).